We begin with the raw amino-acid sequence, 322 residues long: Malate dehydrogenase (322 aa).

NAD(+)-binding positions include 10–15 (GSGQIG) and Asp34. Arg83 and Arg89 together coordinate substrate. Residues Asn96 and 119–121 (ITN) contribute to the NAD(+) site. Positions 121 and 152 each coordinate substrate. His176 (proton acceptor) is an active-site residue.

Belongs to the LDH/MDH superfamily. MDH type 3 family.

The catalysed reaction is (S)-malate + NAD(+) = oxaloacetate + NADH + H(+). Its function is as follows. Catalyzes the reversible oxidation of malate to oxaloacetate. The sequence is that of Malate dehydrogenase from Nitrobacter hamburgensis (strain DSM 10229 / NCIMB 13809 / X14).